Consider the following 427-residue polypeptide: Dihydroorotase (427 aa).

Zn(2+) is bound by residues H58 and H60. Residues 60–62 (HLR) and N92 contribute to the substrate site. Zn(2+) contacts are provided by D150, H177, and H230. N276 contacts substrate. D303 contacts Zn(2+). Residue D303 is part of the active site. Substrate-binding positions include H307 and 321-322 (FG).

This sequence belongs to the metallo-dependent hydrolases superfamily. DHOase family. Class I DHOase subfamily. Zn(2+) is required as a cofactor.

It catalyses the reaction (S)-dihydroorotate + H2O = N-carbamoyl-L-aspartate + H(+). It functions in the pathway pyrimidine metabolism; UMP biosynthesis via de novo pathway; (S)-dihydroorotate from bicarbonate: step 3/3. Functionally, catalyzes the reversible cyclization of carbamoyl aspartate to dihydroorotate. This is Dihydroorotase from Macrococcus caseolyticus (strain JCSC5402) (Macrococcoides caseolyticum).